A 419-amino-acid polypeptide reads, in one-letter code: Phospho-N-acetylmuramoyl-pentapeptide-transferase (419 aa).

Helical transmembrane passes span 22-42 (YVSFRSGLALILSLFISTAIG), 72-92 (TPTMGGIIIIIAILIPTLLCA), 94-114 (LNNIYVILMLVTTVWLGALGF), 135-155 (IVGQVGLGLIVGLVLFMSPDV), 210-230 (AAWLVFVLMVIFVVTAVSNGA), 238-258 (GLAAGTSAIIGVALGILAYMS), 266-286 (FLNIMFIPGAEELVVYAAAFI), 303-323 (FMGDTGSLTLGGIIAVFAIII), 327-347 (LLIPILCGIFLVENISVMLQV), and 396-416 (KIVVRFWLIGIILAVMTIVTL).

It belongs to the glycosyltransferase 4 family. MraY subfamily. Mg(2+) serves as cofactor.

The protein localises to the cell inner membrane. It catalyses the reaction UDP-N-acetyl-alpha-D-muramoyl-L-alanyl-gamma-D-glutamyl-meso-2,6-diaminopimeloyl-D-alanyl-D-alanine + di-trans,octa-cis-undecaprenyl phosphate = di-trans,octa-cis-undecaprenyl diphospho-N-acetyl-alpha-D-muramoyl-L-alanyl-D-glutamyl-meso-2,6-diaminopimeloyl-D-alanyl-D-alanine + UMP. It functions in the pathway cell wall biogenesis; peptidoglycan biosynthesis. Functionally, catalyzes the initial step of the lipid cycle reactions in the biosynthesis of the cell wall peptidoglycan: transfers peptidoglycan precursor phospho-MurNAc-pentapeptide from UDP-MurNAc-pentapeptide onto the lipid carrier undecaprenyl phosphate, yielding undecaprenyl-pyrophosphoryl-MurNAc-pentapeptide, known as lipid I. The chain is Phospho-N-acetylmuramoyl-pentapeptide-transferase from Parabacteroides distasonis (strain ATCC 8503 / DSM 20701 / CIP 104284 / JCM 5825 / NCTC 11152).